We begin with the raw amino-acid sequence, 274 residues long: Small ribosomal subunit protein uS2 (274 aa).

It belongs to the universal ribosomal protein uS2 family.

The chain is Small ribosomal subunit protein uS2 from Syntrophobacter fumaroxidans (strain DSM 10017 / MPOB).